A 347-amino-acid chain; its full sequence is DNA-directed RNA polymerase subunit alpha (347 aa).

The interval 1–226 (MLISQRPTLS…ELFGLARELN (226 aa)) is alpha N-terminal domain (alpha-NTD). An alpha C-terminal domain (alpha-CTD) region spans residues 243–347 (HIASFALPID…EQDYAETEQL (105 aa)).

Belongs to the RNA polymerase alpha chain family. In terms of assembly, homodimer. The RNAP catalytic core consists of 2 alpha, 1 beta, 1 beta' and 1 omega subunit. When a sigma factor is associated with the core the holoenzyme is formed, which can initiate transcription.

The catalysed reaction is RNA(n) + a ribonucleoside 5'-triphosphate = RNA(n+1) + diphosphate. Its function is as follows. DNA-dependent RNA polymerase catalyzes the transcription of DNA into RNA using the four ribonucleoside triphosphates as substrates. The sequence is that of DNA-directed RNA polymerase subunit alpha from Mycobacterium bovis (strain ATCC BAA-935 / AF2122/97).